The chain runs to 496 residues: Cobyric acid synthase (496 aa).

In terms of domain architecture, GATase cobBQ-type spans 252 to 442; that stretch reads DLAVAVIRLP…LHGCFDSDTY (191 aa). Cysteine 333 serves as the catalytic Nucleophile. Histidine 434 is an active-site residue.

This sequence belongs to the CobB/CobQ family. CobQ subfamily.

Its pathway is cofactor biosynthesis; adenosylcobalamin biosynthesis. Catalyzes amidations at positions B, D, E, and G on adenosylcobyrinic A,C-diamide. NH(2) groups are provided by glutamine, and one molecule of ATP is hydrogenolyzed for each amidation. The sequence is that of Cobyric acid synthase from Desulforudis audaxviator (strain MP104C).